Reading from the N-terminus, the 300-residue chain is Protein YIF1B (300 aa).

The tract at residues 1–46 (MNQESSFRAPPKRRVRGPNPNISTPHQLFDDTSGGPVPHGGEYPNH) is disordered. The Cytoplasmic segment spans residues 1 to 142 (MNQESSFRAP…APRFDINAPD (142 aa)). The helical transmembrane segment at 143–163 (LYIPVMAFITYILVAGLALGT) threads the bilayer. Residues 164-178 (QSRFSPEILGMQASS) lie on the Extracellular side of the membrane. Residues 179-199 (ALAWLIVEVLAILLSLYLVTV) traverse the membrane as a helical segment. The Cytoplasmic segment spans residues 200–205 (NTDLTT). The helical transmembrane segment at 206-226 (VDLVAFSGYKYVGMISGVISG) threads the bilayer. A topological domain (extracellular) is located at residue Leu-227. A helical transmembrane segment spans residues 228-248 (LFGKTGYYVVLSWCGISVVFF). The Cytoplasmic segment spans residues 249–278 (MIRTLRLKILSEAAAEGVLVRGARNQLRMY). Residues 279-299 (LTMAIAAVQPIFMYWLTYHLV) form a helical membrane-spanning segment. A topological domain (extracellular) is located at residue Arg-300.

The protein belongs to the YIF1 family.

The protein resides in the endoplasmic reticulum membrane. Its subcellular location is the golgi apparatus membrane. It localises to the endoplasmic reticulum-Golgi intermediate compartment membrane. In terms of biological role, functions in endoplasmic reticulum to Golgi vesicle-mediated transport and regulates the proper organization of the endoplasmic reticulum and the Golgi. Plays a key role in targeting to neuronal dendrites receptors such as HTR1A. Plays also a role in primary cilium and sperm flagellum assembly probably through protein transport to these compartments. The sequence is that of Protein YIF1B (yif1b) from Xenopus tropicalis (Western clawed frog).